The sequence spans 62 residues: Guanine nucleotide-binding protein subunit gamma (62 aa).

The residue at position 59 (C59) is a Cysteine methyl ester. A lipid anchor (S-geranylgeranyl cysteine) is attached at C59. The propeptide at 60-62 (SVL) is removed in mature form.

Belongs to the G protein gamma family. In terms of assembly, g proteins are composed of 3 units, alpha, beta and gamma. Interacts with gpb-1 and gpb-2.

The protein resides in the cell membrane. Functionally, guanine nucleotide-binding proteins (G proteins) are involved as a modulator or transducer in various transmembrane signaling systems. The beta and gamma chains are required for the GTPase activity, for replacement of GDP by GTP, and for G protein-effector interaction. The protein is Guanine nucleotide-binding protein subunit gamma (gpc-1) of Caenorhabditis briggsae.